The following is a 660-amino-acid chain: Neurexin-2-beta (660 aa).

The segment covering 1–10 (MPPGGSGQGG) has biased composition (gly residues). A disordered region spans residues 1-27 (MPPGGSGQGGCPRRPPALAGPLPPPPP). An N-terminal signal peptide occupies residues 1-46 (MPPGGSGQGGCPRRPPALAGPLPPPPPPPPLPLLLGLLLLLGAAEG). Residues 47–584 (ARVSSSLSTT…EVIRESSSTT (538 aa)) lie on the Extracellular side of the membrane. The Laminin G-like domain occupies 87 to 295 (TTYIFGKGGA…HLRLVGEGPS (209 aa)). Residues Asp139 and Val156 each coordinate Ca(2+). N-linked (GlcNAc...) asparagine glycosylation occurs at Asn186. 2 residues coordinate Ca(2+): Ile238 and Asn240. O-linked (Xyl...) (heparan sulfate) serine glycosylation is present at Ser350. Disordered regions lie at residues 408 to 458 (ATQD…LPPT) and 537 to 571 (EPRR…RGPP). The N-linked (GlcNAc...) asparagine glycan is linked to Asn561. A helical transmembrane segment spans residues 585–605 (GMVVGIVAAAALCILILLYAM). Topologically, residues 606–660 (YKYRNRDEGSYQVDQSRNYISNSAQSNGAVVKEKAPAAPKTPSKAKKNKDKEYYV) are cytoplasmic. The disordered stretch occupies residues 627 to 660 (NSAQSNGAVVKEKAPAAPKTPSKAKKNKDKEYYV).

This sequence belongs to the neurexin family. Interacts (via cytoplasmic C-terminal region) with CASK. Specific isoforms bind alpha-dystroglycan and neuroligins NLGN1, NLGN2 and NLGN3. Interacts with CBLN1, CBLN2 and, less avidly, with CBLN4. Interacts with CLSTN3. Post-translationally, O-glycosylated; contains heparan sulfate. Heparan sulfate attachment is required for synapse development by mediating interactions with neuroligins.

It localises to the presynaptic cell membrane. Its function is as follows. Neuronal cell surface protein that may be involved in cell recognition and cell adhesion. The protein is Neurexin-2-beta of Mus musculus (Mouse).